A 1703-amino-acid polypeptide reads, in one-letter code: Arf-GAP with Rho-GAP domain, ANK repeat and PH domain-containing protein 2 (1703 aa).

Residues 6–70 (EVNADIRDFL…LKQLQMIFSK (65 aa)) form the SAM domain. Tyr77 carries the phosphotyrosine modification. Disordered regions lie at residues 84–132 (KNGS…LSEG), 191–232 (EEHT…NGTN), and 286–319 (PVPEIPGSTKSIPGSYFRDRRSNTTSAGKSLTLK). Composition is skewed to polar residues over residues 85–103 (NGSTTKEQQHSDPSSSTHT), 123–132 (MVTTSTLSEG), and 197–214 (GNLTSEDSSKALSTNTEC). Low complexity predominate over residues 222-232 (TSGTHSGNGTN). Residues 308 to 319 (NTTSAGKSLTLK) show a composition bias toward polar residues. PH domains are found at residues 480-572 (AKEK…SALK) and 585-677 (APEK…QSIA). The 136-residue stretch at 674-809 (QSIAETLSDY…TLLASLTKEE (136 aa)) folds into the Arf-GAP domain. The C4-type zinc finger occupies 698-721 (CADCKAPDPDWASINLCVVICKKC). 2 PH domains span residues 899 to 1001 (QTAA…KRFV) and 1012 to 1110 (DYDL…KAAG). A Rho-GAP domain is found at 1114–1295 (NALQDQQLCK…DLINNYVEIF (182 aa)). The region spanning 1324 to 1418 (GDLLIEVFVE…AYLVVKRFLT (95 aa)) is the Ras-associating domain. The PH 5 domain maps to 1428-1531 (KSIKEGILKL…WMASIFIAQH (104 aa)). Ser1627 bears the Phosphoserine mark. Disordered stretches follow at residues 1633-1670 (DTEAEGPHGLPKAYKGPKTLKKTEERNSKATLDADPKL) and 1684-1703 (RSRPLHKELPDEQTLQKEVK). Composition is skewed to basic and acidic residues over residues 1653 to 1670 (KKTEERNSKATLDADPKL) and 1688 to 1703 (LHKELPDEQTLQKEVK).

It is found in the cytoplasm. In terms of biological role, phosphatidylinositol 3,4,5-trisphosphate-dependent GTPase-activating protein that modulates actin cytoskeleton remodeling by regulating ARF and RHO family members. Is activated by phosphatidylinositol 3,4,5-trisphosphate (PtdIns(3,4,5)P3) binding. Can be activated by phosphatidylinositol 3,4-bisphosphate (PtdIns(3,4,5)P2) binding, albeit with lower efficiency. The protein is Arf-GAP with Rho-GAP domain, ANK repeat and PH domain-containing protein 2 (Arap2) of Mus musculus (Mouse).